A 162-amino-acid polypeptide reads, in one-letter code: Large ribosomal subunit protein eL24 (162 aa).

Disordered stretches follow at residues 64–83 (DIHA…PYSR) and 117–162 (ERIK…GGKR). The span at 71 to 81 (KKRRRTTKKPY) shows a compositional bias: basic residues. Positions 117–135 (ERIKKTKDEKKAKKAEVTK) are enriched in basic and acidic residues.

The protein belongs to the eukaryotic ribosomal protein eL24 family.

Its subcellular location is the cytoplasm. In Hordeum vulgare (Barley), this protein is Large ribosomal subunit protein eL24 (RPL24).